The primary structure comprises 506 residues: Dolichyl pyrophosphate Glc1Man9GlcNAc2 alpha-1,3-glucosyltransferase (506 aa).

Helical transmembrane passes span 10–30 (RLLLWFFAVATAVKLLLIPSS), 101–121 (VIYFQRISVIVSDLCLLYGVY), 133–153 (NLICALVIWSPGLLIVDHIHF), 176–196 (LLGGFLFAVLLCFKHLFAVTA), 219–239 (LVTIGAVVVAVFAAAYGPFIY), 261–281 (YWAPNFWVFYIILDKGLAVLL), 305–325 (PFAVLPQITPLTTFAMVLLAI), 339–359 (GLVARWVAYAYTCGFLFGWHV), 384–401 (HYFLVSIVSCYSLYPLLY), 406–426 (YPIKVLLLLLHSVVMWLGFAA), 454–474 (YLMGLIIVEIVSQFLHPYFLG), and 479–499 (FLPLMLISTYCTVGIMYSWIW).

This sequence belongs to the ALG6/ALG8 glucosyltransferase family.

The protein resides in the endoplasmic reticulum membrane. The catalysed reaction is an alpha-D-Glc-(1-&gt;3)-alpha-D-Man-(1-&gt;2)-alpha-D-Man-(1-&gt;2)-alpha-D-Man-(1-&gt;3)-[alpha-D-Man-(1-&gt;2)-alpha-D-Man-(1-&gt;3)-[alpha-D-Man-(1-&gt;2)-alpha-D-Man-(1-&gt;6)]-alpha-D-Man-(1-&gt;6)]-beta-D-Man-(1-&gt;4)-beta-D-GlcNAc-(1-&gt;4)-alpha-D-GlcNAc-diphospho-di-trans,poly-cis-dolichol + a di-trans,poly-cis-dolichyl beta-D-glucosyl phosphate = an alpha-D-Glc-(1-&gt;3)-alpha-D-Glc-(1-&gt;3)-alpha-D-Man-(1-&gt;2)-alpha-D-Man-(1-&gt;2)-alpha-D-Man-(1-&gt;3)-[alpha-D-Man-(1-&gt;2)-alpha-D-Man-(1-&gt;3)-[alpha-D-Man-(1-&gt;2)-alpha-D-Man-(1-&gt;6)]-alpha-D-Man-(1-&gt;6)]-beta-D-Man-(1-&gt;4)-beta-D-GlcNAc-(1-&gt;4)-alpha-D-GlcNAc-diphospho-di-trans,poly-cis-dolichol + a di-trans,poly-cis-dolichyl phosphate + H(+). It functions in the pathway protein modification; protein glycosylation. In terms of biological role, dolichyl pyrophosphate Glc1Man9GlcNAc2 alpha-1,3-glucosyltransferase that operates in the biosynthetic pathway of dolichol-linked oligosaccharides, the glycan precursors employed in protein asparagine (N)-glycosylation. The assembly of dolichol-linked oligosaccharides begins on the cytosolic side of the endoplasmic reticulum membrane and finishes in its lumen. The sequential addition of sugars to dolichol pyrophosphate produces dolichol-linked oligosaccharides containing fourteen sugars, including two GlcNAcs, nine mannoses and three glucoses. Once assembled, the oligosaccharide is transferred from the lipid to nascent proteins by oligosaccharyltransferases. In the lumen of the endoplasmic reticulum, adds the second glucose residue from dolichyl phosphate glucose (Dol-P-Glc) onto the lipid-linked oligosaccharide intermediate Glc(1)Man(9)GlcNAc(2)-PP-Dol to produce Glc(2)Man(9)GlcNAc(2)-PP-Dol. The protein is Dolichyl pyrophosphate Glc1Man9GlcNAc2 alpha-1,3-glucosyltransferase of Arabidopsis thaliana (Mouse-ear cress).